The primary structure comprises 668 residues: UvrABC system protein B (668 aa).

One can recognise a Helicase ATP-binding domain in the interval 25–170 (NSILLGNKYQ…FVGQKISIKE (146 aa)). 38–45 (GVTGSGKT) serves as a coordination point for ATP. Positions 91–114 (YYDYYQPESYVPSKDLFIEKEATI) match the Beta-hairpin motif. The Helicase C-terminal domain occupies 429-595 (QMEDLYSEIQ…TIVKKIQNIL (167 aa)). The UVR domain occupies 622 to 657 (KKLIDKLKFDLEEAVNDERFEDAIVLRDKIKELSSK).

It belongs to the UvrB family. Forms a heterotetramer with UvrA during the search for lesions. Interacts with UvrC in an incision complex.

It localises to the cytoplasm. Its function is as follows. The UvrABC repair system catalyzes the recognition and processing of DNA lesions. A damage recognition complex composed of 2 UvrA and 2 UvrB subunits scans DNA for abnormalities. Upon binding of the UvrA(2)B(2) complex to a putative damaged site, the DNA wraps around one UvrB monomer. DNA wrap is dependent on ATP binding by UvrB and probably causes local melting of the DNA helix, facilitating insertion of UvrB beta-hairpin between the DNA strands. Then UvrB probes one DNA strand for the presence of a lesion. If a lesion is found the UvrA subunits dissociate and the UvrB-DNA preincision complex is formed. This complex is subsequently bound by UvrC and the second UvrB is released. If no lesion is found, the DNA wraps around the other UvrB subunit that will check the other stand for damage. This chain is UvrABC system protein B, found in Borreliella burgdorferi (strain ZS7) (Borrelia burgdorferi).